Consider the following 139-residue polypeptide: Transcription antitermination protein NusB (139 aa).

It belongs to the NusB family.

Its function is as follows. Involved in transcription antitermination. Required for transcription of ribosomal RNA (rRNA) genes. Binds specifically to the boxA antiterminator sequence of the ribosomal RNA (rrn) operons. This is Transcription antitermination protein NusB from Nitratiruptor sp. (strain SB155-2).